We begin with the raw amino-acid sequence, 271 residues long: Large ribosomal subunit protein uL2cz/uL2cy (271 aa).

Disordered regions lie at residues 1-22 and 223-271; these read MAKH…DRQV and PVDH…RRRK.

This sequence belongs to the universal ribosomal protein uL2 family. As to quaternary structure, part of the 50S ribosomal subunit.

Its subcellular location is the plastid. The protein localises to the chloroplast. This is Large ribosomal subunit protein uL2cz/uL2cy (rpl2-A) from Sorghum bicolor (Sorghum).